The primary structure comprises 250 residues: 3-deoxy-manno-octulosonate cytidylyltransferase (250 aa).

This sequence belongs to the KdsB family.

It localises to the cytoplasm. The enzyme catalyses 3-deoxy-alpha-D-manno-oct-2-ulosonate + CTP = CMP-3-deoxy-beta-D-manno-octulosonate + diphosphate. The protein operates within nucleotide-sugar biosynthesis; CMP-3-deoxy-D-manno-octulosonate biosynthesis; CMP-3-deoxy-D-manno-octulosonate from 3-deoxy-D-manno-octulosonate and CTP: step 1/1. It functions in the pathway bacterial outer membrane biogenesis; lipopolysaccharide biosynthesis. In terms of biological role, activates KDO (a required 8-carbon sugar) for incorporation into bacterial lipopolysaccharide in Gram-negative bacteria. The polypeptide is 3-deoxy-manno-octulosonate cytidylyltransferase (Francisella tularensis subsp. tularensis (strain FSC 198)).